Reading from the N-terminus, the 123-residue chain is Small ribosomal subunit protein bS16 (123 aa).

The segment at 87–123 (VKNNPVKAKPGKRAQERAAEKAQKVADAAAAAADAAE) is disordered. Basic and acidic residues predominate over residues 99–110 (RAQERAAEKAQK). The segment covering 111-123 (VADAAAAAADAAE) has biased composition (low complexity).

It belongs to the bacterial ribosomal protein bS16 family.

This Rhizobium johnstonii (strain DSM 114642 / LMG 32736 / 3841) (Rhizobium leguminosarum bv. viciae) protein is Small ribosomal subunit protein bS16.